Consider the following 293-residue polypeptide: MAAITASMVAELRAKTDAPMMECKKALTEADGDMARAEELLRVKLGNKASKAASRVTAEGVIASFIEGGAGAIVELNCETDFVSKNDDFIGFSKKVAELVVKQNPADVGALSALALDGSTVDAVRSALVGKIGENLSIRRFARFETSNKLAAYLHGTRIGVLVEYTGADEQVGKDVAMHIAAMKPVSLSSDDVPADLIAKERSIAEQKAAESGKPAEIVAKMVDGSVQKYLKEVSLLNQPFVKNDKQTIEQMLKAANASVQNFALFVVGEGIEKRQDDFAAEVAAQVAAAKQQ.

Residues 80–83 (TDFV) are involved in Mg(2+) ion dislocation from EF-Tu.

It belongs to the EF-Ts family.

The protein localises to the cytoplasm. Associates with the EF-Tu.GDP complex and induces the exchange of GDP to GTP. It remains bound to the aminoacyl-tRNA.EF-Tu.GTP complex up to the GTP hydrolysis stage on the ribosome. The sequence is that of Elongation factor Ts from Paraburkholderia phymatum (strain DSM 17167 / CIP 108236 / LMG 21445 / STM815) (Burkholderia phymatum).